Reading from the N-terminus, the 395-residue chain is MNFKRMTDLDLSEKRVLIREDLNVPVKNGQITSDARLRAALPTIQAALAQGAAVMVCSHLGRPVEGEPKPEQSLAPVAAYLSDALGQEVKLLTDYLEGVEIAPGQVVLLENVRFNLGEKKNNAELAQKYAALCDVFVMDAFGTAHRAEASTEGAARYAKVAAAGPLLATELDALGRALQTPEKPMVAIVAGSKVSTKLDVLTSLSDICGQLIVGGGIANTFLAAAGFNVGKSLCENDLIDTAKAIAAKVSVPLPTDVVVADATEIDFADFLGSLAKAQAIVKKVEDIADNDMILDVGPDTAKAFAEILKTAKTILWNGPVGVFEVDQFGEGTKTLSLAIAESKGFSIAGGGDTLAAIDKYKVADKIGYISTGGGAFLEFVEGKTLPAVAVLLERA.

Substrate contacts are provided by residues 21–23 (DLN), arginine 36, 59–62 (HLGR), arginine 113, and arginine 146. Residues lysine 197, glutamate 324, and 350 to 353 (GGDT) each bind ATP.

The protein belongs to the phosphoglycerate kinase family. Monomer.

The protein localises to the cytoplasm. The catalysed reaction is (2R)-3-phosphoglycerate + ATP = (2R)-3-phospho-glyceroyl phosphate + ADP. The protein operates within carbohydrate degradation; glycolysis; pyruvate from D-glyceraldehyde 3-phosphate: step 2/5. The sequence is that of Phosphoglycerate kinase from Acinetobacter baylyi (strain ATCC 33305 / BD413 / ADP1).